The following is a 616-amino-acid chain: Protein cereblon (616 aa).

3 disordered regions span residues 1 to 39 (MDEE…DDSV), 63 to 137 (FGPS…AMPR), and 182 to 220 (SQER…DIDM). The segment covering 11-32 (AQEQEVAGSAGEAAAGPSGAEV) has biased composition (low complexity). The span at 96-107 (SEEDIVLDDGTE) shows a compositional bias: acidic residues. The segment covering 183–192 (QERRRSRNSD) has biased composition (basic and acidic residues). Residues 194–203 (VSPEAEDDEL) show a composition bias toward acidic residues. Pro residues predominate over residues 206 to 215 (HPPPPPPRPP). A Lon N-terminal domain is found at 257-482 (HMLIFLHQYI…LIGGILKEET (226 aa)). The region spanning 481–590 (ETLFYCRYCN…LAGSSVRIGK (110 aa)) is the CULT domain. C486, C489, C555, and C558 together coordinate Zn(2+).

The protein belongs to the CRBN family. Likely a component of a DCX (DDB1-CUL4-X-box) protein ligase complex. May interact with pic/DDB1. Ubiquitinated.

Its subcellular location is the nucleus. The protein operates within protein modification; protein ubiquitination. Its function is as follows. Substrate recognition component of a DCX (DDB1-CUL4-X-box) E3 protein ligase complex that mediates the ubiquitination and subsequent proteasomal degradation of target proteins. Has an essential role in mediating growth by negatively regulating insulin signaling. It also has a role in maintaining presynaptic function in the neuromuscular junction synapses of third-instar larvae. The polypeptide is Protein cereblon (Drosophila pseudoobscura pseudoobscura (Fruit fly)).